Consider the following 59-residue polypeptide: UPF0434 protein Rsph17025_2896 (59 aa).

Belongs to the UPF0434 family.

The protein is UPF0434 protein Rsph17025_2896 of Cereibacter sphaeroides (strain ATCC 17025 / ATH 2.4.3) (Rhodobacter sphaeroides).